A 146-amino-acid polypeptide reads, in one-letter code: MRGTSAVCWSLLLLIALLSQNVTAKGGRGGARGGARGASRGASRVRLKTSSRYGSLRVASQAAAAGAAARAAARLSENTWRNNDHSGMDTQFGNSTNEGMYSYRAWTSGTCPLSSHLSFRLIISIGAILTCSSSSIYVSTKINLGK.

Positions 1 to 24 (MRGTSAVCWSLLLLIALLSQNVTA) are cleaved as a signal peptide. N94 is a glycosylation site (N-linked (GlcNAc...) asparagine). S108 carries GPI-anchor amidated serine lipidation. Residues 109-146 (GTCPLSSHLSFRLIISIGAILTCSSSSIYVSTKINLGK) constitute a propeptide, removed in mature form.

This sequence belongs to the SPRN family.

Its subcellular location is the cell membrane. Prion-like protein that has PrP(C)-like neuroprotective activity. The polypeptide is Shadow of prion protein (sprn) (Xenopus tropicalis (Western clawed frog)).